A 44-amino-acid chain; its full sequence is U4-ctenitoxin-Pk1a (44 aa).

Disulfide bonds link Cys-4–Cys-18, Cys-11–Cys-24, Cys-15–Cys-42, Cys-17–Cys-33, and Cys-26–Cys-31.

Expressed by the venom gland.

It is found in the secreted. Neurotoxin. Causes spastic paralysis and death in mice within 10 minutes at dose levels of 3 ug per mouse. This Phoneutria keyserlingi (Brazilian wandering spider) protein is U4-ctenitoxin-Pk1a.